The chain runs to 368 residues: MQRVIIVGSTGSIGTQAIDFILKNRDSFLVVGLAASTQTSLLREQAQVLGTKNTAQGASEAAELIEATEADVVLNAITGAAGLLSTYATLKTGKRLALANKESLIMGGKYFLDMTTFKGQITPVDSEHSAIAQAMKSGKFSEVNKLILTASGGPFYDRESLEGITLKDALDHPTWNMGPMISINSATMFNKGLEIIEAHLLFGIPYSQIDVVIHPQSIVHSMVEYKDGSVIAQASVADMTLPIGYALSWPNRALNAVRPLEWGARQRWDFLPPTENSMRSINLARRAGEAGGVYPAVLNASNECAVEAFMAGKISFARIIHVTETVFNLYTKQHTNRESAKNPIEVILEEDARTRELAKTVIENMSAD.

NADPH contacts are provided by Thr10, Gly11, Ser12, Ile13, Gln38, and Asn100. 1-deoxy-D-xylulose 5-phosphate is bound at residue Lys101. An NADPH-binding site is contributed by Glu102. Mn(2+) is bound at residue Asp125. Residues Ser126, Glu127, Ser151, and His172 each coordinate 1-deoxy-D-xylulose 5-phosphate. Glu127 is a binding site for Mn(2+). Residue Gly178 participates in NADPH binding. 4 residues coordinate 1-deoxy-D-xylulose 5-phosphate: Ser185, Asn190, Lys191, and Glu194. A Mn(2+)-binding site is contributed by Glu194.

It belongs to the DXR family. It depends on Mg(2+) as a cofactor. Mn(2+) serves as cofactor.

The enzyme catalyses 2-C-methyl-D-erythritol 4-phosphate + NADP(+) = 1-deoxy-D-xylulose 5-phosphate + NADPH + H(+). The protein operates within isoprenoid biosynthesis; isopentenyl diphosphate biosynthesis via DXP pathway; isopentenyl diphosphate from 1-deoxy-D-xylulose 5-phosphate: step 1/6. Catalyzes the NADPH-dependent rearrangement and reduction of 1-deoxy-D-xylulose-5-phosphate (DXP) to 2-C-methyl-D-erythritol 4-phosphate (MEP). This Tropheryma whipplei (strain Twist) (Whipple's bacillus) protein is 1-deoxy-D-xylulose 5-phosphate reductoisomerase.